Here is a 594-residue protein sequence, read N- to C-terminus: Solute carrier family 22 member 14 (594 aa).

The Cytoplasmic segment spans residues Met1–Val70. The helical transmembrane segment at Ala71–Phe91 threads the bilayer. Residues Thr92 to Asp184 are Extracellular-facing. Asn99, Asn117, Asn125, and Asn150 each carry an N-linked (GlcNAc...) asparagine glycan. Residues Thr185 to Thr205 form a helical membrane-spanning segment. Residues Asp206–Arg210 lie on the Cytoplasmic side of the membrane. The helical transmembrane segment at Tyr211–Met231 threads the bilayer. The Extracellular portion of the chain corresponds to Asn232–His235. A helical transmembrane segment spans residues Leu236–Ile256. The Cytoplasmic segment spans residues Ser257–His270. The chain crosses the membrane as a helical span at residues Ala271 to Tyr291. Residues Ser292–Gln297 lie on the Extracellular side of the membrane. Residues Leu298 to Pro318 form a helical membrane-spanning segment. The Cytoplasmic portion of the chain corresponds to Glu319–Lys379. A helical membrane pass occupies residues Val380 to Leu400. Residues Arg401–Ser408 lie on the Extracellular side of the membrane. Residues Val409–Leu431 traverse the membrane as a helical segment. The Cytoplasmic portion of the chain corresponds to Gln432–Lys437. A helical transmembrane segment spans residues Trp438 to Pro458. Residues Glu459 to Glu488 are Extracellular-facing. Residues Phe489–Val509 form a helical membrane-spanning segment. The Cytoplasmic portion of the chain corresponds to Leu510–Ala512. Residues Thr513–Ile533 traverse the membrane as a helical segment. Residues Ser534–Ser538 are Extracellular-facing. A helical membrane pass occupies residues Leu539–Leu559. At Pro560 to Val594 the chain is on the cytoplasmic side. Residues Pro566–Val594 form a disordered region. Polar residues predominate over residues Leu567–Arg578. The span at Lys580–Val594 shows a compositional bias: basic and acidic residues.

Belongs to the major facilitator (TC 2.A.1) superfamily. Organic cation transporter (TC 2.A.1.19) family. As to expression, ubiquitous.

Its subcellular location is the mitochondrion inner membrane. The protein resides in the cell projection. The protein localises to the cilium. It is found in the flagellum membrane. It catalyses the reaction riboflavin(in) = riboflavin(out). Riboflavin transporter localized at the inner mitochondrial membrane of the spermatozoa midpiece, which is required for male fertility. SLC22A14-mediated riboflavin transport is essential for spermatozoa energy generation and motility: riboflavin is the precursor of FMN and FAD, which are coenzymes of many enzymes in the TCA cycle (the citric acid cycle) in mitochondria. Required for sperm motility and normal sperm flagellar structure. The chain is Solute carrier family 22 member 14 from Homo sapiens (Human).